An 85-amino-acid polypeptide reads, in one-letter code: Double gene block protein 2 (85 aa).

Topologically, residues 1 to 2 (MK) are lumenal. The helical transmembrane segment at 3 to 23 (VLLVTGVLGLLLLIKWKSQST) threads the bilayer. Residues 24 to 36 (STSNQTCQCPTSP) are Cytoplasmic-facing. A helical transmembrane segment spans residues 37-56 (WVIYAFYNSLSLVLLLCHLI). Residues 57–85 (PEIKPIHTSYNTHDSSKQQHISINTGNGK) are Lumenal-facing.

This sequence belongs to the carmovirus double gene block protein 2 family.

The protein localises to the host endoplasmic reticulum membrane. Functionally, cell-to-cell movement function. This chain is Double gene block protein 2, found in Turnip crinkle virus (TCV).